The chain runs to 80 residues: Delta-actitoxin-Amc2a (80 aa).

The N-terminal stretch at 1–19 (MNKVLFLCLVVLCATSAFA) is a signal peptide. A propeptide spanning residues 20–30 (AEEEYVERAPV) is cleaved from the precursor. Intrachain disulfides connect Cys37–Cys73, Cys39–Cys65, and Cys55–Cys74. The residue at position 56 (Pro56) is a Hydroxyproline.

Belongs to the sea anemone type 3 (BDS) potassium channel toxin family.

It localises to the secreted. Its subcellular location is the nematocyst. Its function is as follows. Neurotoxon that induces paralysis when injected into crabs. This is Delta-actitoxin-Amc2a from Antheopsis maculata (Sea anemone).